The chain runs to 123 residues: Galanin peptides (123 aa).

The signal sequence occupies residues 1–19; that stretch reads MPRGSVLLLASLLLAAALS. Positions 20-30 are excised as a propeptide; the sequence is ATLGLGSPVKE. The span at 53-66 shows a compositional bias: basic and acidic residues; that stretch reads SFQDKHGLAGKREL. Residues 53–79 are disordered; sequence SFQDKHGLAGKRELEPEDEARPGSFDR. Alanine 61 carries the alanine amide modification. The residue at position 116 (serine 116) is a Phosphoserine.

The protein belongs to the galanin family.

It localises to the secreted. In terms of biological role, endocrine hormone of the central and peripheral nervous systems that binds and activates the G protein-coupled receptors GALR1, GALR2, and GALR3. This small neuropeptide may regulate diverse physiologic functions including contraction of smooth muscle of the gastrointestinal and genitourinary tract, growth hormone and insulin release and adrenal secretion. This is Galanin peptides (GAL) from Bos taurus (Bovine).